Here is a 637-residue protein sequence, read N- to C-terminus: 3D-(3,5/4)-trihydroxycyclohexane-1,2-dione hydrolase (637 aa).

Position 66 (glutamate 66) interacts with thiamine diphosphate. The thiamine pyrophosphate binding stretch occupies residues 442 to 522; it reads SLPGDLQRLW…INVLLFDNSG (81 aa). Positions 493 and 520 each coordinate Mg(2+).

The protein belongs to the TPP enzyme family. Mg(2+) serves as cofactor. It depends on thiamine diphosphate as a cofactor.

The catalysed reaction is 3D-3,5/4-trihydroxycyclohexane-1,2-dione + H2O = 5-deoxy-D-glucuronate + H(+). The protein operates within polyol metabolism; myo-inositol degradation into acetyl-CoA; acetyl-CoA from myo-inositol: step 3/7. In terms of biological role, involved in the cleavage of the C1-C2 bond of 3D-(3,5/4)-trihydroxycyclohexane-1,2-dione (THcHDO) to yield 5-deoxy-glucuronate (5DG). This Bacillus velezensis (strain DSM 23117 / BGSC 10A6 / LMG 26770 / FZB42) (Bacillus amyloliquefaciens subsp. plantarum) protein is 3D-(3,5/4)-trihydroxycyclohexane-1,2-dione hydrolase.